Consider the following 189-residue polypeptide: Ribosome maturation factor RimM (189 aa).

The PRC barrel domain occupies 113–189 (DGEYYWVDLL…TIVADWQPDY (77 aa)).

It belongs to the RimM family. As to quaternary structure, binds ribosomal protein uS19.

The protein localises to the cytoplasm. An accessory protein needed during the final step in the assembly of 30S ribosomal subunit, possibly for assembly of the head region. Essential for efficient processing of 16S rRNA. May be needed both before and after RbfA during the maturation of 16S rRNA. It has affinity for free ribosomal 30S subunits but not for 70S ribosomes. This Delftia acidovorans (strain DSM 14801 / SPH-1) protein is Ribosome maturation factor RimM.